The following is a 739-amino-acid chain: Phosphoribosylformylglycinamidine synthase subunit PurL (739 aa).

Residue histidine 52 is part of the active site. ATP contacts are provided by tyrosine 55 and lysine 94. Residue glutamate 96 coordinates Mg(2+). Residues 97 to 100 (SHNH) and arginine 119 contribute to the substrate site. The Proton acceptor role is filled by histidine 98. Aspartate 120 lines the Mg(2+) pocket. Residue glutamine 243 coordinates substrate. Aspartate 271 provides a ligand contact to Mg(2+). 315 to 317 (ESQ) contributes to the substrate binding site. ATP contacts are provided by aspartate 498 and glycine 535. Asparagine 536 lines the Mg(2+) pocket. Serine 538 contributes to the substrate binding site.

The protein belongs to the FGAMS family. Monomer. Part of the FGAM synthase complex composed of 1 PurL, 1 PurQ and 2 PurS subunits.

It localises to the cytoplasm. It carries out the reaction N(2)-formyl-N(1)-(5-phospho-beta-D-ribosyl)glycinamide + L-glutamine + ATP + H2O = 2-formamido-N(1)-(5-O-phospho-beta-D-ribosyl)acetamidine + L-glutamate + ADP + phosphate + H(+). Its pathway is purine metabolism; IMP biosynthesis via de novo pathway; 5-amino-1-(5-phospho-D-ribosyl)imidazole from N(2)-formyl-N(1)-(5-phospho-D-ribosyl)glycinamide: step 1/2. Functionally, part of the phosphoribosylformylglycinamidine synthase complex involved in the purines biosynthetic pathway. Catalyzes the ATP-dependent conversion of formylglycinamide ribonucleotide (FGAR) and glutamine to yield formylglycinamidine ribonucleotide (FGAM) and glutamate. The FGAM synthase complex is composed of three subunits. PurQ produces an ammonia molecule by converting glutamine to glutamate. PurL transfers the ammonia molecule to FGAR to form FGAM in an ATP-dependent manner. PurS interacts with PurQ and PurL and is thought to assist in the transfer of the ammonia molecule from PurQ to PurL. The chain is Phosphoribosylformylglycinamidine synthase subunit PurL from Caulobacter vibrioides (strain ATCC 19089 / CIP 103742 / CB 15) (Caulobacter crescentus).